Reading from the N-terminus, the 394-residue chain is Nicotinate phosphoribosyltransferase (394 aa).

His-218 carries the post-translational modification Phosphohistidine; by autocatalysis.

The protein belongs to the NAPRTase family. In terms of processing, transiently phosphorylated on a His residue during the reaction cycle. Phosphorylation strongly increases the affinity for substrates and increases the rate of nicotinate D-ribonucleotide production. Dephosphorylation regenerates the low-affinity form of the enzyme, leading to product release.

The enzyme catalyses nicotinate + 5-phospho-alpha-D-ribose 1-diphosphate + ATP + H2O = nicotinate beta-D-ribonucleotide + ADP + phosphate + diphosphate. The protein operates within cofactor biosynthesis; NAD(+) biosynthesis; nicotinate D-ribonucleotide from nicotinate: step 1/1. Its function is as follows. Catalyzes the synthesis of beta-nicotinate D-ribonucleotide from nicotinate and 5-phospho-D-ribose 1-phosphate at the expense of ATP. This is Nicotinate phosphoribosyltransferase from Xylella fastidiosa (strain 9a5c).